We begin with the raw amino-acid sequence, 493 residues long: uncharacterized protein (493 aa).

A disordered region spans residues 96 to 124 (TTVAKASPPPAKPASAPTEITWKGSPQFT).

This is an uncharacterized protein from Caulobacter vibrioides (strain ATCC 19089 / CIP 103742 / CB 15) (Caulobacter crescentus).